Here is a 207-residue protein sequence, read N- to C-terminus: Large ribosomal subunit protein uL3 (207 aa).

The tract at residues 126-149 is disordered; sequence GPASHGSKKWHRRPGSIGQRKTPG.

This sequence belongs to the universal ribosomal protein uL3 family. As to quaternary structure, part of the 50S ribosomal subunit. Forms a cluster with proteins L14 and L19.

Its function is as follows. One of the primary rRNA binding proteins, it binds directly near the 3'-end of the 23S rRNA, where it nucleates assembly of the 50S subunit. The chain is Large ribosomal subunit protein uL3 from Deinococcus geothermalis (strain DSM 11300 / CIP 105573 / AG-3a).